The sequence spans 458 residues: UDP-N-acetylmuramoylalanine--D-glutamate ligase (458 aa).

124 to 130 lines the ATP pocket; it reads GSDGKTT.

Belongs to the MurCDEF family.

Its subcellular location is the cytoplasm. The catalysed reaction is UDP-N-acetyl-alpha-D-muramoyl-L-alanine + D-glutamate + ATP = UDP-N-acetyl-alpha-D-muramoyl-L-alanyl-D-glutamate + ADP + phosphate + H(+). It participates in cell wall biogenesis; peptidoglycan biosynthesis. Its function is as follows. Cell wall formation. Catalyzes the addition of glutamate to the nucleotide precursor UDP-N-acetylmuramoyl-L-alanine (UMA). The chain is UDP-N-acetylmuramoylalanine--D-glutamate ligase from Clostridium beijerinckii (strain ATCC 51743 / NCIMB 8052) (Clostridium acetobutylicum).